The primary structure comprises 87 residues: Cobalt transport protein CbiN (87 aa).

The next 2 helical transmembrane spans lie at 4–24 (LLLLLILLIFAAKVTAEEWAG) and 58–78 (MLFSLQAAIGSLIIGYFLGYY).

This sequence belongs to the CbiN family. As to quaternary structure, forms an energy-coupling factor (ECF) transporter complex composed of an ATP-binding protein (A component, CbiO), a transmembrane protein (T component, CbiQ) and 2 possible substrate-capture proteins (S components, CbiM and CbiN) of unknown stoichimetry.

The protein localises to the cell membrane. Its pathway is cofactor biosynthesis; adenosylcobalamin biosynthesis. Functionally, part of the energy-coupling factor (ECF) transporter complex CbiMNOQ involved in cobalt import. This is Cobalt transport protein CbiN from Archaeoglobus fulgidus (strain ATCC 49558 / DSM 4304 / JCM 9628 / NBRC 100126 / VC-16).